We begin with the raw amino-acid sequence, 230 residues long: Ribonuclease 3 (230 aa).

The region spanning 1–134 (MKQLEELLST…FLGALLLDKG (134 aa)) is the RNase III domain. Glu47 is a Mg(2+) binding site. Residue Asp51 is part of the active site. Residues Asp120 and Glu123 each contribute to the Mg(2+) site. Residue Glu123 is part of the active site. A DRBM domain is found at 160-229 (DYKTCLQEFL…AKNALAQLSE (70 aa)).

The protein belongs to the ribonuclease III family. As to quaternary structure, homodimer. Mg(2+) serves as cofactor.

The protein resides in the cytoplasm. The enzyme catalyses Endonucleolytic cleavage to 5'-phosphomonoester.. Digests double-stranded RNA. Involved in the processing of primary rRNA transcript to yield the immediate precursors to the large and small rRNAs (23S and 16S). Processes some mRNAs, and tRNAs when they are encoded in the rRNA operon. Processes pre-crRNA and tracrRNA of type II CRISPR loci if present in the organism. The sequence is that of Ribonuclease 3 from Streptococcus pyogenes serotype M2 (strain MGAS10270).